Consider the following 346-residue polypeptide: 3-keto-steroid reductase (346 aa).

Leu-16, Thr-39, and Arg-45 together coordinate NADP(+). Active-site proton donor residues include Ser-178 and Tyr-201. Residues Tyr-201, Lys-205, and Ser-236 each coordinate NADP(+). The Lowers pKa of active site Tyr role is filled by Lys-205.

This sequence belongs to the short-chain dehydrogenases/reductases (SDR) family. ERG27 subfamily.

It catalyses the reaction a 3beta-hydroxysteroid + NADP(+) = a 3-oxosteroid + NADPH + H(+). Its pathway is steroid biosynthesis; zymosterol biosynthesis; zymosterol from lanosterol: step 5/6. Functionally, responsible for the reduction of the keto group on the C-3 of sterols. This is 3-keto-steroid reductase (ERG27) from Kluyveromyces lactis (strain ATCC 8585 / CBS 2359 / DSM 70799 / NBRC 1267 / NRRL Y-1140 / WM37) (Yeast).